We begin with the raw amino-acid sequence, 331 residues long: Tetraacyldisaccharide 4'-kinase (331 aa).

Position 55 to 62 (55 to 62) interacts with ATP; sequence SVGGNGKT.

It belongs to the LpxK family.

It catalyses the reaction a lipid A disaccharide + ATP = a lipid IVA + ADP + H(+). Its pathway is glycolipid biosynthesis; lipid IV(A) biosynthesis; lipid IV(A) from (3R)-3-hydroxytetradecanoyl-[acyl-carrier-protein] and UDP-N-acetyl-alpha-D-glucosamine: step 6/6. In terms of biological role, transfers the gamma-phosphate of ATP to the 4'-position of a tetraacyldisaccharide 1-phosphate intermediate (termed DS-1-P) to form tetraacyldisaccharide 1,4'-bis-phosphate (lipid IVA). The polypeptide is Tetraacyldisaccharide 4'-kinase (Aeromonas salmonicida (strain A449)).